A 470-amino-acid polypeptide reads, in one-letter code: Cysteine--tRNA ligase (470 aa).

Cys30 provides a ligand contact to Zn(2+). A 'HIGH' region motif is present at residues 32 to 42 (PTVYNYIHIGN). Residues Cys211, His236, and Glu240 each coordinate Zn(2+). The 'KMSKS' region motif lies at 268–272 (KMSKS). Lys271 is an ATP binding site.

Belongs to the class-I aminoacyl-tRNA synthetase family. Monomer. Zn(2+) serves as cofactor.

The protein localises to the cytoplasm. The enzyme catalyses tRNA(Cys) + L-cysteine + ATP = L-cysteinyl-tRNA(Cys) + AMP + diphosphate. The sequence is that of Cysteine--tRNA ligase from Fervidobacterium nodosum (strain ATCC 35602 / DSM 5306 / Rt17-B1).